A 73-amino-acid chain; its full sequence is UPF0346 protein LVIS_0790 (73 aa).

This sequence belongs to the UPF0346 family.

The polypeptide is UPF0346 protein LVIS_0790 (Levilactobacillus brevis (strain ATCC 367 / BCRC 12310 / CIP 105137 / JCM 1170 / LMG 11437 / NCIMB 947 / NCTC 947) (Lactobacillus brevis)).